A 253-amino-acid polypeptide reads, in one-letter code: Indole-3-glycerol phosphate synthase (253 aa).

This sequence belongs to the TrpC family.

It catalyses the reaction 1-(2-carboxyphenylamino)-1-deoxy-D-ribulose 5-phosphate + H(+) = (1S,2R)-1-C-(indol-3-yl)glycerol 3-phosphate + CO2 + H2O. It participates in amino-acid biosynthesis; L-tryptophan biosynthesis; L-tryptophan from chorismate: step 4/5. The chain is Indole-3-glycerol phosphate synthase from Bacillus cereus (strain ZK / E33L).